Reading from the N-terminus, the 149-residue chain is SsrA-binding protein (149 aa).

Residues 121–149 (GKGEHDKRDTIKDREGKREVERAMKSRSR) are disordered.

Belongs to the SmpB family.

It is found in the cytoplasm. Required for rescue of stalled ribosomes mediated by trans-translation. Binds to transfer-messenger RNA (tmRNA), required for stable association of tmRNA with ribosomes. tmRNA and SmpB together mimic tRNA shape, replacing the anticodon stem-loop with SmpB. tmRNA is encoded by the ssrA gene; the 2 termini fold to resemble tRNA(Ala) and it encodes a 'tag peptide', a short internal open reading frame. During trans-translation Ala-aminoacylated tmRNA acts like a tRNA, entering the A-site of stalled ribosomes, displacing the stalled mRNA. The ribosome then switches to translate the ORF on the tmRNA; the nascent peptide is terminated with the 'tag peptide' encoded by the tmRNA and targeted for degradation. The ribosome is freed to recommence translation, which seems to be the essential function of trans-translation. The polypeptide is SsrA-binding protein (Polaromonas sp. (strain JS666 / ATCC BAA-500)).